A 287-amino-acid chain; its full sequence is Fructose-1,6-bisphosphatase class 1 (287 aa).

Glu-67, Asp-87, Leu-89, and Asp-90 together coordinate Mg(2+). Substrate-binding positions include 90 to 93, Tyr-195, and Lys-225; that span reads DGSS. A Mg(2+)-binding site is contributed by Glu-231.

Belongs to the FBPase class 1 family. As to quaternary structure, homotetramer. Requires Mg(2+) as cofactor.

Its subcellular location is the cytoplasm. The enzyme catalyses beta-D-fructose 1,6-bisphosphate + H2O = beta-D-fructose 6-phosphate + phosphate. Its pathway is carbohydrate biosynthesis; gluconeogenesis. In Halobacterium salinarum (strain ATCC 29341 / DSM 671 / R1), this protein is Fructose-1,6-bisphosphatase class 1.